Here is a 276-residue protein sequence, read N- to C-terminus: Golgi apparatus membrane protein TVP23 homolog C (276 aa).

The residue at position 1 (Met1) is an N-acetylmethionine. A disordered region spans residues 1–21; it reads MLQQDSNDDTEDVSLFDAEEE. Helical transmembrane passes span 52 to 72 and 126 to 146; these read LLCE…ILLL and IFWL…FSAL. The interval 254-276 is disordered; sequence GESPNSRGTGEPGPKFHLASGMH.

Belongs to the TVP23 family.

The protein localises to the membrane. The chain is Golgi apparatus membrane protein TVP23 homolog C (TVP23C) from Homo sapiens (Human).